A 498-amino-acid chain; its full sequence is Cytochrome P450 monooxygenase aflU (498 aa).

The helical transmembrane segment at 5-27 (TVYTSLIGLLVALTVRSIYRVYF) threads the bilayer. 2 N-linked (GlcNAc...) asparagine glycosylation sites follow: Asn259 and Asn354. Cys438 lines the heme pocket.

Belongs to the cytochrome P450 family. The cofactor is heme.

The protein resides in the membrane. It participates in mycotoxin biosynthesis; aflatoxin biosynthesis. In terms of biological role, cytochrome P450 monooxygenase; part of the gene cluster that mediates the biosynthesis of aflatoxins, a group of polyketide-derived furanocoumarins, and part of the most toxic and carcinogenic compounds among the known mycotoxins. The four major aflatoxins produced by A.parasiticus are aflatoxin B1 (AFB1), aflatoxin B2 (AFB2), aflatoxin G1 (AFG1) and aflatoxin G2 (AFG2). Within the aflatoxin pathway, the cytochrome P450 monooxygenase aflU is involved in the last steps in which OMST is converted to aflatoxins B1 and G1, and DHOMST to aflatoxins B2 and G2. The biosynthesis of aflatoxins begins with the norsolorinic acid synthase aflC that combines a hexanoyl starter unit produced by the fatty acid synthase aflA/aflB and 7 malonyl-CoA extender units to synthesize the precursor NOR. The second step is the conversion of NOR to averantin and requires the norsolorinic acid ketoreductase aflD, which catalyzes the dehydration of norsolorinic acid to form (1'S)-averantin. The norsolorinic acid reductases aflE and aflF may also play a role in the conversion of NOR to AVN. The cytochrome P450 monooxygenase aflG then catalyzes the hydroxylation of AVN to 5'hydroxyaverantin (HAVN). The next step is performed by the 5'-hydroxyaverantin dehydrogenase aflH that transforms HAVN to 5'-oxoaverantin (OAVN) which is further converted to averufin (AVF) by aflK that plays a dual role in the pathway, as a 5'-oxoaverantin cyclase that mediates conversion of 5'-oxoaverantin, as well as a versicolorin B synthase in a later step in the pathway. The averufin oxidase aflI catalyzes the conversion of AVF to versiconal hemiacetal acetate (VHA). VHA is then the substrate for the versiconal hemiacetal acetate esterase aflJ to yield versiconal (VAL). Versicolorin B synthase aflK then converts VAL to versicolorin B (VERB) by closing the bisfuran ring of aflatoxin which is required for DNA-binding, thus giving to aflatoxin its activity as a mutagen. Then, the activity of the versicolorin B desaturase aflL leads to versicolorin A (VERA). A branch point starts from VERB since it can also be converted to dihydrodemethylsterigmatocystin (DMDHST), probably also by aflL, VERA being a precursor for aflatoxins B1 and G1, and DMDHST for aflatoxins B2 and G2. Next, the versicolorin reductase aflM and the cytochrome P450 monooxygenase aflN are involved in conversion of VERA to demethylsterigmatocystin (DMST). AflX and aflY seem also involved in this step, through probable aflX-mediated epoxide ring-opening step following versicolorin A oxidation and aflY-mediated Baeyer-Villiger oxidation required for the formation of the xanthone ring. The methyltransferase aflO then leads to the modification of DMST to sterigmatocystin (ST), and of DMDHST to dihydrosterigmatocystin (DHST). Both ST and DHST are then substrates of the O-methyltransferase aflP to yield O-methylsterigmatocystin (OMST) and dihydro-O-methylsterigmatocystin (DHOMST), respectively. Finally OMST is converted to aflatoxins B1 and G1, and DHOMST to aflatoxins B2 and G2, via the action of several enzymes including O-methylsterigmatocystin oxidoreductase aflQ, the cytochrome P450 monooxygenase aflU, but also the NADH-dependent flavin oxidoreductase nadA which is specifically required for the synthesis of AFG1. The protein is Cytochrome P450 monooxygenase aflU of Aspergillus parasiticus (strain ATCC 56775 / NRRL 5862 / SRRC 143 / SU-1).